Consider the following 225-residue polypeptide: ATP-dependent Clp protease proteolytic subunit (225 aa).

The active-site Nucleophile is Ser101. Residue His126 is part of the active site.

The protein belongs to the peptidase S14 family. Component of the chloroplastic Clp protease core complex.

The protein resides in the plastid. Its subcellular location is the chloroplast stroma. It catalyses the reaction Hydrolysis of proteins to small peptides in the presence of ATP and magnesium. alpha-casein is the usual test substrate. In the absence of ATP, only oligopeptides shorter than five residues are hydrolyzed (such as succinyl-Leu-Tyr-|-NHMec, and Leu-Tyr-Leu-|-Tyr-Trp, in which cleavage of the -Tyr-|-Leu- and -Tyr-|-Trp bonds also occurs).. Functionally, cleaves peptides in various proteins in a process that requires ATP hydrolysis. Has a chymotrypsin-like activity. Plays a major role in the degradation of misfolded proteins. In Chlorokybus atmophyticus (Soil alga), this protein is ATP-dependent Clp protease proteolytic subunit.